A 211-amino-acid chain; its full sequence is Dihydrofolate reductase (211 aa).

The DHFR domain maps to 7-210; that stretch reads PIVGIVACLQ…YCFEFTLYNR (204 aa). NADP(+) is bound by residues Ala13 and 20-26; that span reads GIGFRGG. Residue 34–39 coordinates substrate; it reads EMKYFR. 58–60 contacts NADP(+); that stretch reads RKT. Arg74 is a substrate binding site. NADP(+) contacts are provided by residues 80-82 and 123-130; these read SRS and GGGEVYSQ.

The protein belongs to the dihydrofolate reductase family.

The enzyme catalyses (6S)-5,6,7,8-tetrahydrofolate + NADP(+) = 7,8-dihydrofolate + NADPH + H(+). Its pathway is cofactor biosynthesis; tetrahydrofolate biosynthesis; 5,6,7,8-tetrahydrofolate from 7,8-dihydrofolate: step 1/1. Functionally, key enzyme in folate metabolism. Catalyzes an essential reaction for de novo glycine and purine synthesis, and for DNA precursor synthesis. The sequence is that of Dihydrofolate reductase (DFR1) from Saccharomyces cerevisiae (strain ATCC 204508 / S288c) (Baker's yeast).